The primary structure comprises 212 residues: ATP-dependent dethiobiotin synthetase BioD (212 aa).

An ATP-binding site is contributed by 13–18; it reads GIGKTV. T17 is a Mg(2+) binding site. K33 is an active-site residue. S37 lines the substrate pocket. A Mg(2+)-binding site is contributed by E100. ATP contacts are provided by residues 100–103 and 184–186; these read EGAG and PLL.

Belongs to the dethiobiotin synthetase family. In terms of assembly, homodimer. The cofactor is Mg(2+).

It localises to the cytoplasm. It carries out the reaction (7R,8S)-7,8-diammoniononanoate + CO2 + ATP = (4R,5S)-dethiobiotin + ADP + phosphate + 3 H(+). Its pathway is cofactor biosynthesis; biotin biosynthesis; biotin from 7,8-diaminononanoate: step 1/2. Its function is as follows. Catalyzes a mechanistically unusual reaction, the ATP-dependent insertion of CO2 between the N7 and N8 nitrogen atoms of 7,8-diaminopelargonic acid (DAPA, also called 7,8-diammoniononanoate) to form a ureido ring. This is ATP-dependent dethiobiotin synthetase BioD from Brucella melitensis biotype 2 (strain ATCC 23457).